Reading from the N-terminus, the 61-residue chain is Large ribosomal subunit protein bL32 (61 aa).

Basic residues predominate over residues 1 to 16 (MAVPRRKTSPSRRGMR). A disordered region spans residues 1-61 (MAVPRRKTSP…RQVLKVKKED (61 aa)). A compositionally biased stretch (basic and acidic residues) spans 17 to 44 (RSADALKKPTYVEDKDSGELRRPHHLDL).

This sequence belongs to the bacterial ribosomal protein bL32 family.

This is Large ribosomal subunit protein bL32 from Afipia carboxidovorans (strain ATCC 49405 / DSM 1227 / KCTC 32145 / OM5) (Oligotropha carboxidovorans).